A 556-amino-acid chain; its full sequence is Arginine--tRNA ligase (556 aa).

The short motif at 130-140 (ANPTGPIHLGG) is the 'HIGH' region element.

The protein belongs to the class-I aminoacyl-tRNA synthetase family. As to quaternary structure, monomer.

It is found in the cytoplasm. It carries out the reaction tRNA(Arg) + L-arginine + ATP = L-arginyl-tRNA(Arg) + AMP + diphosphate. This is Arginine--tRNA ligase from Corynebacterium jeikeium (strain K411).